We begin with the raw amino-acid sequence, 190 residues long: Probable nicotinate-nucleotide adenylyltransferase (190 aa).

It belongs to the NadD family.

The catalysed reaction is nicotinate beta-D-ribonucleotide + ATP + H(+) = deamido-NAD(+) + diphosphate. It functions in the pathway cofactor biosynthesis; NAD(+) biosynthesis; deamido-NAD(+) from nicotinate D-ribonucleotide: step 1/1. In terms of biological role, catalyzes the reversible adenylation of nicotinate mononucleotide (NaMN) to nicotinic acid adenine dinucleotide (NaAD). The protein is Probable nicotinate-nucleotide adenylyltransferase of Borrelia turicatae (strain 91E135).